The primary structure comprises 837 residues: Protein translocase subunit SecA 1 (837 aa).

ATP is bound by residues Gln85, 103-107 (GEGKT), and Asp493. Positions 821, 823, 832, and 833 each coordinate Zn(2+).

The protein belongs to the SecA family. In terms of assembly, monomer and homodimer. Part of the essential Sec protein translocation apparatus which comprises SecA, SecYEG and auxiliary proteins SecDF. Other proteins may also be involved. Requires Zn(2+) as cofactor.

It is found in the cell membrane. Its subcellular location is the cytoplasm. It catalyses the reaction ATP + H2O + cellular proteinSide 1 = ADP + phosphate + cellular proteinSide 2.. Part of the Sec protein translocase complex. Interacts with the SecYEG preprotein conducting channel. Has a central role in coupling the hydrolysis of ATP to the transfer of proteins into and across the cell membrane, serving as an ATP-driven molecular motor driving the stepwise translocation of polypeptide chains across the membrane. This is Protein translocase subunit SecA 1 from Streptococcus pneumoniae serotype 4 (strain ATCC BAA-334 / TIGR4).